A 733-amino-acid polypeptide reads, in one-letter code: Ribosomal protein S6 kinase alpha-2 (733 aa).

A Protein kinase 1 domain is found at 59-318; sequence FELLKVLGQG…VEEIKRHPFF (260 aa). ATP-binding positions include 65 to 73 and Lys91; that span reads LGQGSYGKV. Asp184 functions as the Proton acceptor in the catalytic mechanism. Ser218 is modified (phosphoserine; by PDPK1). Residues 319 to 388 enclose the AGC-kinase C-terminal domain; it reads VTIDWNTLYR…VASSLIQEPS (70 aa). The residue at position 377 (Ser377) is a Phosphoserine. The region spanning 415 to 672 is the Protein kinase 2 domain; it reads YEIKEDIGVG…AMQVLKHPWV (258 aa). ATP-binding positions include 421–429 and Lys444; that span reads IGVGSYSVC. Asp532 (proton acceptor) is an active-site residue.

The protein belongs to the protein kinase superfamily. AGC Ser/Thr protein kinase family. S6 kinase subfamily. As to quaternary structure, forms a complex with either MAPK1/ERK2 or MAPK3/ERK1 in quiescent cells. Transiently dissociates following mitogenic stimulation. Interacts with FBXO5; cooperate to induce the metaphase arrest of early blastomeres; increases and stabilizes interaction of FBXO5 with CDC20. Requires Mg(2+) as cofactor. Post-translationally, activated by phosphorylation at Ser-218 by PDPK1. Autophosphorylated on Ser-377, as part of the activation process. May be phosphorylated at Thr-356 and Ser-360 by MAPK1/ERK2 and MAPK3/ERK1. In terms of processing, N-terminal myristoylation results in an activated kinase in the absence of added growth factors. In terms of tissue distribution, widely expressed with higher expression in lung, skeletal muscle, brain, uterus, ovary, thyroid and prostate.

The protein resides in the nucleus. It localises to the cytoplasm. The catalysed reaction is L-seryl-[protein] + ATP = O-phospho-L-seryl-[protein] + ADP + H(+). It catalyses the reaction L-threonyl-[protein] + ATP = O-phospho-L-threonyl-[protein] + ADP + H(+). With respect to regulation, upon extracellular signal or mitogen stimulation, phosphorylated at Thr-570 in the C-terminal kinase domain (CTKD) by MAPK1/ERK2 and MAPK3/ERK1. The activated CTKD then autophosphorylates Ser-377, allowing binding of PDPK1, which in turn phosphorylates Ser-218 in the N-terminal kinase domain (NTDK) leading to the full activation of the protein and subsequent phosphorylation of the substrates by the NTKD. Serine/threonine-protein kinase that acts downstream of ERK (MAPK1/ERK2 and MAPK3/ERK1) signaling and mediates mitogenic and stress-induced activation of transcription factors, regulates translation, and mediates cellular proliferation, survival, and differentiation. May function as tumor suppressor in epithelial ovarian cancer cells. The polypeptide is Ribosomal protein S6 kinase alpha-2 (RPS6KA2) (Homo sapiens (Human)).